Consider the following 219-residue polypeptide: OVARIAN TUMOR DOMAIN-containing deubiquitinating enzyme 12 (219 aa).

The region spanning 79–203 is the OTU domain; the sequence is LCELKVSGDG…EVHYNSLYDI (125 aa). The active site involves Asp-87. Residue Cys-90 is the Nucleophile of the active site. His-196 is an active-site residue.

The protein belongs to the peptidase C85 family.

The enzyme catalyses Thiol-dependent hydrolysis of ester, thioester, amide, peptide and isopeptide bonds formed by the C-terminal Gly of ubiquitin (a 76-residue protein attached to proteins as an intracellular targeting signal).. In terms of biological role, hydrolase that can remove conjugated ubiquitin from proteins in vitro and may therefore play an important regulatory role at the level of protein turnover by preventing degradation. Inactive cysteine protease. In Arabidopsis thaliana (Mouse-ear cress), this protein is OVARIAN TUMOR DOMAIN-containing deubiquitinating enzyme 12.